The primary structure comprises 751 residues: Diamine oxidase [copper-containing] (751 aa).

An N-terminal signal peptide occupies residues 1–19; it reads MPALGWAVAAILMLQTAMA. Asparagine 110 and asparagine 168 each carry an N-linked (GlcNAc...) asparagine glycan. Cysteine 177 and cysteine 181 form a disulfide bridge. Aspartate 373 functions as the Proton acceptor in the catalytic mechanism. The cysteines at positions 391 and 417 are disulfide-linked. Tyrosine 461 acts as the Schiff-base intermediate with substrate; via topaquinone in catalysis. A 2',4',5'-topaquinone modification is found at tyrosine 461. The Cu(2+) site is built by histidine 510 and histidine 512. Ca(2+)-binding residues include aspartate 519, leucine 520, and aspartate 521. The N-linked (GlcNAc...) asparagine glycan is linked to asparagine 538. Ca(2+) contacts are provided by glutamate 562, phenylalanine 653, asparagine 656, glutamate 658, aspartate 664, and leucine 665. Position 675 (histidine 675) interacts with Cu(2+). Asparagine 745 carries N-linked (GlcNAc...) asparagine glycosylation.

Belongs to the copper/topaquinone oxidase family. In terms of assembly, homodimer; disulfide-linked. Cu(2+) serves as cofactor. Ca(2+) is required as a cofactor. It depends on L-topaquinone as a cofactor. In terms of processing, N-glycosylated. Topaquinone (TPQ) is generated by copper-dependent autoxidation of a specific tyrosyl residue. In terms of tissue distribution, widely expressed with higher expression in placenta and kidney.

The protein localises to the secreted. Its subcellular location is the extracellular space. It is found in the cell membrane. The enzyme catalyses histamine + O2 + H2O = imidazole-4-acetaldehyde + H2O2 + NH4(+). The catalysed reaction is N(tau)-methylhistamine + O2 + H2O = 1-methylimidazole-4-acetaldehyde + H2O2 + NH4(+). It carries out the reaction putrescine + O2 + H2O = 4-aminobutanal + H2O2 + NH4(+). It catalyses the reaction cadaverine + O2 + H2O = 5-aminopentanal + H2O2 + NH4(+). Its activity is regulated as follows. Inhibited by amiloride and amiloride analogs. Inhibited by isoniazid, cimetidine, clonidine, berenil and pentamidine. Functionally, catalyzes the oxidative deamination of primary amines to the corresponding aldehydes with the concomitant production of hydrogen peroxide and ammonia. Its preferred substrates are the diamines histamine and 1-methylhistamine and it could therefore play a role in allergic and immune responses. Has a broad specificity for diamines and can also act on cadaverine and putrescine, two products of amino acid catabolism. It could also act on polyamines, like spermidine and spermine though less efficiently, and regulate various biological processes. The chain is Diamine oxidase [copper-containing] from Homo sapiens (Human).